Here is a 431-residue protein sequence, read N- to C-terminus: Glutamate-1-semialdehyde 2,1-aminomutase (431 aa).

K269 bears the N6-(pyridoxal phosphate)lysine mark.

Belongs to the class-III pyridoxal-phosphate-dependent aminotransferase family. HemL subfamily. As to quaternary structure, homodimer. It depends on pyridoxal 5'-phosphate as a cofactor.

The protein localises to the cytoplasm. The catalysed reaction is (S)-4-amino-5-oxopentanoate = 5-aminolevulinate. It participates in porphyrin-containing compound metabolism; protoporphyrin-IX biosynthesis; 5-aminolevulinate from L-glutamyl-tRNA(Glu): step 2/2. This Francisella tularensis subsp. mediasiatica (strain FSC147) protein is Glutamate-1-semialdehyde 2,1-aminomutase.